The primary structure comprises 155 residues: 6,7-dimethyl-8-ribityllumazine synthase (155 aa).

5-amino-6-(D-ribitylamino)uracil is bound by residues Phe23, 57 to 59, and 81 to 83; these read AFE and AVI. 86-87 provides a ligand contact to (2S)-2-hydroxy-3-oxobutyl phosphate; that stretch reads ST. His89 serves as the catalytic Proton donor. Residue Phe114 participates in 5-amino-6-(D-ribitylamino)uracil binding. Arg128 serves as a coordination point for (2S)-2-hydroxy-3-oxobutyl phosphate.

This sequence belongs to the DMRL synthase family.

It carries out the reaction (2S)-2-hydroxy-3-oxobutyl phosphate + 5-amino-6-(D-ribitylamino)uracil = 6,7-dimethyl-8-(1-D-ribityl)lumazine + phosphate + 2 H2O + H(+). The protein operates within cofactor biosynthesis; riboflavin biosynthesis; riboflavin from 2-hydroxy-3-oxobutyl phosphate and 5-amino-6-(D-ribitylamino)uracil: step 1/2. Functionally, catalyzes the formation of 6,7-dimethyl-8-ribityllumazine by condensation of 5-amino-6-(D-ribitylamino)uracil with 3,4-dihydroxy-2-butanone 4-phosphate. This is the penultimate step in the biosynthesis of riboflavin. This Desulfatibacillum aliphaticivorans protein is 6,7-dimethyl-8-ribityllumazine synthase.